The primary structure comprises 3175 residues: Replicase polyprotein 1ab (3175 aa).

The C4-type; atypical zinc-finger motif lies at C25–C44. The 91-residue stretch at S66 to T156 folds into the Peptidase C31 domain. The 104-residue stretch at D157–G260 folds into the Peptidase C32 domain. Active-site for Nsp1 papain-like cysteine proteinase activity residues include C164 and H230. Residues G261–K339 are OTU-like. One can recognise a Peptidase C33 domain in the interval G261–S360. C270 functions as the For Nsp2 cysteine proteinase activity in the catalytic mechanism. C319 is a Zn(2+) binding site. The active-site For Nsp2 cysteine proteinase activity is the H332. The Zn(2+) site is built by C349, C354, and C356. Positions V386–E451 are disordered. 7 helical membrane-spanning segments follow: residues A530 to I550, G551 to N571, F625 to L645, L829 to T849, Y903 to I923, L935 to G955, and L977 to L997. The segment at A530–L645 is HD1. The tract at residues L829 to L997 is HD2. One can recognise a Peptidase S32 domain in the interval G1065–E1268. Active-site charge relay system; for 3C-like serine proteinase activity residues include H1103, D1129, and S1184. 4 helical membrane-spanning segments follow: residues A1291–G1311, C1333–I1353, A1355–V1375, and G1385–G1405. An HD3 region spans residues A1291–G1405. Residue N1501 is glycosylated (N-linked (GlcNAc...) asparagine; by host). Residues N1577–D1614 are disordered. Basic and acidic residues predominate over residues E1600–G1612. In terms of domain architecture, NiRAN spans L1716 to D1883. Residues K2116 to S2251 enclose the RdRp catalytic domain. Residues S2371 to P2438 enclose the AV ZBD domain. C2374, C2377, C2387, C2392, C2395, H2399, H2402, C2403, C2412, H2414, C2423, and C2426 together coordinate Zn(2+). Residues P2496–L2661 form the (+)RNA virus helicase ATP-binding domain. G2528–T2535 is a binding site for ATP. A (+)RNA virus helicase C-terminal domain is found at R2662–E2793. Residues K2840–R2930 form the AV-Nsp11N/CoV-Nsp15M domain. A NendoU domain is found at L2932–V3054. Catalysis depends on residues H2963, H2978, and K3007.

This sequence belongs to the arteriviridae polyprotein family. In terms of assembly, nsp1 interacts with cellular transcription cofactor SND1/p100. Specific enzymatic cleavages in vivo by its own proteases yield mature proteins. There are two alternative pathways for processing. Either nsp4-5 is cleaved, which represents the major pathway or the nsp5-6 and nsp6-7 are processed, which represents the minor pathway. The major pathway occurs when nsp2 acts as a cofactor for nsp4.

It localises to the host nucleus. The protein resides in the host cytoplasm. Its subcellular location is the host membrane. The protein localises to the host perinuclear region. The enzyme catalyses RNA(n) + a ribonucleoside 5'-triphosphate = RNA(n+1) + diphosphate. The catalysed reaction is ATP + H2O = ADP + phosphate + H(+). It carries out the reaction Thiol-dependent hydrolysis of ester, thioester, amide, peptide and isopeptide bonds formed by the C-terminal Gly of ubiquitin (a 76-residue protein attached to proteins as an intracellular targeting signal).. It catalyses the reaction uridylyl-uridylyl-ribonucleotide-RNA = a 3'-end uridylyl-2',3'-cyclophospho-uridine-RNA + a 5'-end dephospho-ribonucleoside-RNA. In terms of biological role, the replicase polyprotein 1ab is a multifunctional protein: it contains the activities necessary for the transcription of negative stranded RNA, leader RNA, subgenomic mRNAs and progeny virion RNA as well as proteinases responsible for the cleavage of the polyprotein into functional products. Its function is as follows. Nsp1 is essential for viral subgenomic mRNA synthesis. Nsp2 cysteine proteinase which cleaves the nsp2/nsp3 site in the polyprotein. Also displays deubiquitinating and deISGylase activities. The deubiquitinating activity cleaves both ubiquitinated and ISGylated products and may therefore regulate ubiquitin and ISG15 dependent host innate immunity. Functionally, the 3C-like serine proteinase chain is responsible for the majority of cleavages as it cleaves the C-terminus of the polyprotein. In terms of biological role, the helicase chain, which contains a zinc finger structure, displays RNA and DNA duplex-unwinding activities with 5' to 3' polarity. Its function is as follows. Plays a role in viral transcription/replication and prevents the simultaneous activation of host cell dsRNA sensors, such as MDA5/IFIH1, OAS, and PKR. Acts by degrading the 5'-polyuridines generated during replication of the poly(A) region of viral genomic and subgenomic RNAs. Catalyzes a two-step reaction in which a 2'3'-cyclic phosphate (2'3'-cP) is first generated by 2'-O transesterification, which is then hydrolyzed to a 3'-phosphate (3'-P). If not degraded, poly(U) RNA would hybridize with poly(A) RNA tails and activate host dsRNA sensors. The polypeptide is Replicase polyprotein 1ab (rep) (Equidae (horses)).